Consider the following 35-residue polypeptide: MSDIN-like toxin proprotein 6 (35 aa).

Positions 1–10 are excised as a propeptide; sequence MSDINGTRLP. Residues 11-20 constitute a cross-link (cyclopeptide (Ile-Pro)); that stretch reads IPGLIPLGIP. A propeptide spanning residues 21 to 35 is cleaved from the precursor; the sequence is CVSDDVNPTLTRGER.

This sequence belongs to the MSDIN fungal toxin family. Processed by the macrocyclase-peptidase enzyme POPB to yield a toxic cyclic decapeptide. POPB first removes 10 residues from the N-terminus. Conformational trapping of the remaining peptide forces the enzyme to release this intermediate rather than proceed to macrocyclization. The enzyme rebinds the remaining peptide in a different conformation and catalyzes macrocyclization of the N-terminal 10 residues.

Functionally, probable toxin that belongs to the MSDIN-like toxin family responsible for a large number of food poisoning cases and deaths. This is MSDIN-like toxin proprotein 6 from Amanita bisporigera (Destroying angel).